We begin with the raw amino-acid sequence, 531 residues long: Peptide chain release factor 3 (531 aa).

The 270-residue stretch at 13–282 (SKRRTFAIIS…GLTQWAPSPM (270 aa)) folds into the tr-type G domain. GTP contacts are provided by residues 22-29 (SHPDAGKT), 90-94 (DTPGH), and 144-147 (NKLD).

It belongs to the TRAFAC class translation factor GTPase superfamily. Classic translation factor GTPase family. PrfC subfamily.

It localises to the cytoplasm. Functionally, increases the formation of ribosomal termination complexes and stimulates activities of RF-1 and RF-2. It binds guanine nucleotides and has strong preference for UGA stop codons. It may interact directly with the ribosome. The stimulation of RF-1 and RF-2 is significantly reduced by GTP and GDP, but not by GMP. The polypeptide is Peptide chain release factor 3 (Vibrio cholerae serotype O1 (strain ATCC 39541 / Classical Ogawa 395 / O395)).